The sequence spans 508 residues: Steroid 17-alpha-hydroxylase/17,20 lyase (508 aa).

Asparagine 202 serves as a coordination point for substrate. Cysteine 442 is a heme binding site.

Belongs to the cytochrome P450 family. Heme serves as cofactor.

Its subcellular location is the endoplasmic reticulum membrane. It is found in the microsome membrane. The catalysed reaction is a C21-steroid + reduced [NADPH--hemoprotein reductase] + O2 = a 17alpha-hydroxy-C21-steroid + oxidized [NADPH--hemoprotein reductase] + H2O + H(+). The enzyme catalyses progesterone + reduced [NADPH--hemoprotein reductase] + O2 = 17alpha-hydroxyprogesterone + oxidized [NADPH--hemoprotein reductase] + H2O + H(+). It catalyses the reaction pregnenolone + reduced [NADPH--hemoprotein reductase] + O2 = 17alpha-hydroxypregnenolone + oxidized [NADPH--hemoprotein reductase] + H2O + H(+). It carries out the reaction 17alpha-hydroxyprogesterone + reduced [NADPH--hemoprotein reductase] + O2 = androst-4-ene-3,17-dione + acetate + oxidized [NADPH--hemoprotein reductase] + H2O + 2 H(+). The catalysed reaction is 17alpha-hydroxyprogesterone + reduced [NADPH--hemoprotein reductase] + O2 = 16alpha,17alpha-dihydroxyprogesterone + oxidized [NADPH--hemoprotein reductase] + H2O + H(+). The enzyme catalyses 16alpha,17alpha-dihydroxyprogesterone + reduced [NADPH--hemoprotein reductase] + O2 = 6beta,16alpha,17alpha-trihydroxyprogesterone + oxidized [NADPH--hemoprotein reductase] + H2O + H(+). It catalyses the reaction 17alpha-hydroxypregnenolone + reduced [NADPH--hemoprotein reductase] + O2 = 3beta-hydroxyandrost-5-en-17-one + acetate + oxidized [NADPH--hemoprotein reductase] + H2O + 2 H(+). It carries out the reaction 16alpha,17alpha-dihydroxypregnenolone + reduced [NADPH--hemoprotein reductase] + O2 = 3beta,16alpha-dihydroxy-androst-5-en-17-one + acetate + oxidized [NADPH--hemoprotein reductase] + H2O + 2 H(+). The catalysed reaction is 3beta-hydroxyandrost-5-en-17-one + reduced [NADPH--hemoprotein reductase] + O2 = 3beta,16alpha-dihydroxy-androst-5-en-17-one + oxidized [NADPH--hemoprotein reductase] + H2O + H(+). The enzyme catalyses androst-4-ene-3,17-dione + reduced [NADPH--hemoprotein reductase] + O2 = 16alpha-hydroxyandrost-4-ene-3,17-dione + oxidized [NADPH--hemoprotein reductase] + H2O + H(+). The protein operates within steroid hormone biosynthesis. Its pathway is steroid biosynthesis; glucocorticoid biosynthesis. Its activity is regulated as follows. Regulated predominantly by intracellular cAMP levels. The 17,20-lyase activity is stimulated by cytochrome b5, which acts as an allosteric effector increasing the Vmax of the lyase activity. Functionally, a cytochrome P450 monooxygenase involved in corticoid and androgen biosynthesis. Catalyzes 17-alpha hydroxylation of C21 steroids, which is common for both pathways. A second oxidative step, required only for androgen synthesis, involves an acyl-carbon cleavage. The 17-alpha hydroxy intermediates, as part of adrenal glucocorticoids biosynthesis pathway, are precursors of cortisol. Hydroxylates steroid hormones, pregnenolone and progesterone to form 17-alpha hydroxy metabolites, followed by the cleavage of the C17-C20 bond to form C19 steroids, dehydroepiandrosterone (DHEA) and androstenedione. Has 16-alpha hydroxylase activity. Catalyzes 16-alpha hydroxylation of 17-alpha hydroxy pregnenolone, followed by the cleavage of the C17-C20 bond to form 16-alpha-hydroxy DHEA. Also 16-alpha hydroxylates androgens, relevant for estriol synthesis. Mechanistically, uses molecular oxygen inserting one oxygen atom into a substrate, and reducing the second into a water molecule, with two electrons provided by NADPH via cytochrome P450 reductase (CPR; NADPH-ferrihemoprotein reductase). This is Steroid 17-alpha-hydroxylase/17,20 lyase (CYP17A1) from Pan troglodytes (Chimpanzee).